We begin with the raw amino-acid sequence, 153 residues long: Actin-related protein 2/3 complex subunit 5-like protein (153 aa).

Position 64 is a phosphoserine (S64).

Belongs to the ARPC5 family. May be a component of the Arp2/3 complex in which it may replace ARPC5.

It is found in the cytoplasm. Its subcellular location is the cytoskeleton. Functionally, may function as component of the Arp2/3 complex which is involved in regulation of actin polymerization and together with an activating nucleation-promoting factor (NPF) mediates the formation of branched actin networks. In Mus musculus (Mouse), this protein is Actin-related protein 2/3 complex subunit 5-like protein (Arpc5l).